The following is an 852-amino-acid chain: DNA repair protein rhp54 (852 aa).

Short sequence motifs (nuclear localization signal) lie at residues 35 to 51 (KKFKCPSLVISEKRKEL) and 178 to 181 (KRKK). A compositionally biased stretch (basic and acidic residues) spans 187–205 (NRKGKKEISDSEPESDHDS). Positions 187 to 208 (NRKGKKEISDSEPESDHDSCVS) are disordered. The Helicase ATP-binding domain maps to 281–459 (GRIDRCANGC…FSLLNFANPG (179 aa)). Position 294 to 301 (294 to 301 (DEMGLGKT)) interacts with ATP. Positions 410–413 (DEGH) match the DEGH box motif. In terms of domain architecture, Helicase C-terminal spans 614-767 (VLERMLYQIK…CVVDEAQDVE (154 aa)).

Belongs to the SNF2/RAD54 helicase family. In terms of assembly, homohexamer. Interacts with rhp51.

Its subcellular location is the nucleus. It carries out the reaction ATP + H2O = ADP + phosphate + H(+). Its function is as follows. Plays an essential role in homologous recombination (HR) which is a major pathway for repairing DNA double-strand breaks (DSBs), single-stranded DNA (ssDNA) gaps, and stalled or collapsed replication forks. Acts as a molecular motor during the homology search and guides RAD51 ssDNA along a donor dsDNA thereby changing the homology search from the diffusion-based mechanism to a motor-guided mechanism. Plays also an essential role in RAD51-mediated synaptic complex formation which consists of three strands encased in a protein filament formed once homology is recognized. Once DNA strand exchange occured, dissociates RAD51 from nucleoprotein filaments formed on dsDNA. The sequence is that of DNA repair protein rhp54 (rhp54) from Schizosaccharomyces pombe (strain 972 / ATCC 24843) (Fission yeast).